A 224-amino-acid chain; its full sequence is COMM domain-containing protein 5 (224 aa).

S2 carries the N-acetylserine modification. Residues 151 to 215 (HIADFRWRVD…LVLKEMADLE (65 aa)) enclose the COMM domain.

It belongs to the COMM domain-containing protein 5 family. Component of the commander complex consisting of the CCC subcomplex and the retriever subcomplex. Component of the CCC (COMMD/CCDC22/CCDC93) subcomplex consisting of COMMD1, COMMD2, COMMD3, COMMD4, COMMD5, COMMD6, COMMD7, COMMD8, COMMD9, COMMD10, CCDC22 and CCDC93; within the complex forms a heterodimer with COMMD10. Interacts (via COMM domain) with COMMD1 (via COMM domain). Interacts with RELA, RELB, NFKB1/p105. Interacts with CCDC22, CCDC93, SCNN1B, CUL2, CUL3, CUL4A, CUL4B, CUL7.

The protein resides in the nucleus. It localises to the cytoplasm. In terms of biological role, scaffold protein in the commander complex that is essential for endosomal recycling of transmembrane cargos; the commander complex is composed of the CCC subcomplex and the retriever subcomplex. May modulate activity of cullin-RING E3 ubiquitin ligase (CRL) complexes. Negatively regulates cell proliferation. Negatively regulates cell cycle G2/M phase transition probably by transactivating p21/CDKN1A through the p53/TP53-independent signaling pathway. Involved in kidney proximal tubule morphogenesis. Down-regulates activation of NF-kappa-B. This is COMM domain-containing protein 5 (COMMD5) from Bos taurus (Bovine).